Here is a 184-residue protein sequence, read N- to C-terminus: Thymidine kinase (184 aa).

Residues 10–17 (GPMYSGKT) and 83–86 (DEVQ) each bind ATP. E84 (proton acceptor) is an active-site residue. The Zn(2+) site is built by C140, C143, C173, and C176.

It belongs to the thymidine kinase family. Homotetramer.

The protein resides in the cytoplasm. It carries out the reaction thymidine + ATP = dTMP + ADP + H(+). This is Thymidine kinase from Thermotoga sp. (strain RQ2).